A 97-amino-acid chain; its full sequence is MRLWFCLSFLIILCVEHFPGTLAVERNVPESEEKTEQFLRDLFEISRLQRRPAGFTPFRGKFHSQSLRGLSETKRIYNAIWPCKHCNKCKPGLLCKK.

The N-terminal stretch at 1–23 is a signal peptide; sequence MRLWFCLSFLIILCVEHFPGTLA.

Belongs to the bradykinin-related peptide family. Expressed by the skin glands.

The protein localises to the secreted. Its function is as follows. [Ala3,Thr6]bradykinin: produces in vitro relaxation of rat arterial smooth muscle and constriction of intestinal smooth muscle. Possesses insulin-releasing activity. May target bradykinin receptors (BDKRB). The sequence is that of Kininogen-1 from Bombina variegata (Yellow-bellied toad).